The chain runs to 259 residues: V-type proton ATPase subunit D (259 aa).

The disordered stretch occupies residues 214 to 259; the sequence is KLKEQEAAQRALEGPPKEEAGGTHSENQPPRNLLAVEEDNLPVLFN.

The protein belongs to the V-ATPase D subunit family. As to quaternary structure, V-ATPase is a heteromultimeric enzyme made up of two complexes: the ATP-hydrolytic V1 complex and the proton translocation V0 complex. The V1 complex consists of three catalytic AB heterodimers that form a heterohexamer, three peripheral stalks each consisting of EG heterodimers, one central rotor including subunits D and F, and the regulatory subunits C and H. The proton translocation complex V0 consists of the proton transport subunit a, a ring of proteolipid subunits c9c'', rotary subunit d, and The proton translocation complex V0 consists of the proton transport subunit a, a ring of proteolipid subunits c9c'', rotary subunit d, subunits e and f, and the accessory subunits vah-19/Ac45 and vah-20/PRR.

Functionally, subunit of the V1 complex of vacuolar(H+)-ATPase (V-ATPase), a multisubunit enzyme composed of a peripheral complex (V1) that hydrolyzes ATP and a membrane integral complex (V0) that translocates protons. V-ATPase is responsible for acidifying and maintaining the pH of intracellular compartments and in some cell types, is targeted to the plasma membrane, where it is responsible for acidifying the extracellular environment. The chain is V-type proton ATPase subunit D from Caenorhabditis briggsae.